The chain runs to 295 residues: NAD kinase (295 aa).

The active-site Proton acceptor is the Asp-74. NAD(+) contacts are provided by residues 74–75 (DG), 148–149 (ND), His-159, Arg-176, Asp-178, and 189–194 (TAYALS).

It belongs to the NAD kinase family. It depends on a divalent metal cation as a cofactor.

It localises to the cytoplasm. It carries out the reaction NAD(+) + ATP = ADP + NADP(+) + H(+). Functionally, involved in the regulation of the intracellular balance of NAD and NADP, and is a key enzyme in the biosynthesis of NADP. Catalyzes specifically the phosphorylation on 2'-hydroxyl of the adenosine moiety of NAD to yield NADP. In Legionella pneumophila (strain Paris), this protein is NAD kinase.